The primary structure comprises 162 residues: 3-isopropylmalate dehydratase small subunit (162 aa).

Belongs to the LeuD family. LeuD type 2 subfamily. As to quaternary structure, heterodimer of LeuC and LeuD.

It carries out the reaction (2R,3S)-3-isopropylmalate = (2S)-2-isopropylmalate. It participates in amino-acid biosynthesis; L-leucine biosynthesis; L-leucine from 3-methyl-2-oxobutanoate: step 2/4. Functionally, catalyzes the isomerization between 2-isopropylmalate and 3-isopropylmalate, via the formation of 2-isopropylmaleate. This is 3-isopropylmalate dehydratase small subunit (leuD) from Methanothermobacter thermautotrophicus (strain ATCC 29096 / DSM 1053 / JCM 10044 / NBRC 100330 / Delta H) (Methanobacterium thermoautotrophicum).